We begin with the raw amino-acid sequence, 201 residues long: NADH-ubiquinone oxidoreductase 21.3 kDa subunit (201 aa).

In terms of assembly, complex I is composed of about 40 different subunits.

The protein resides in the mitochondrion inner membrane. The catalysed reaction is a ubiquinone + NADH + 5 H(+)(in) = a ubiquinol + NAD(+) + 4 H(+)(out). Transfer of electrons from NADH to the respiratory chain. The immediate electron acceptor for the enzyme is believed to be ubiquinone. This is NADH-ubiquinone oxidoreductase 21.3 kDa subunit from Neurospora crassa (strain ATCC 24698 / 74-OR23-1A / CBS 708.71 / DSM 1257 / FGSC 987).